The following is a 180-amino-acid chain: Insulin-like growth factor 2 (180 aa).

The first 24 residues, 1–24 (MGIPMGKSMLVLLTFLAFASCCIA), serve as a signal peptide directing secretion. Residues 25-52 (AYRPSETLCGGELVDTLQFVCGDRGFYF) form a b region. 3 disulfides stabilise this stretch: Cys33–Cys71, Cys45–Cys84, and Cys70–Cys75. The tract at residues 53–64 (SRPASRVSRRSR) is c. The segment at 65 to 85 (GIVEECCFRSCDLALLETYCA) is a. Positions 86 to 91 (TPAKSE) are d. A propeptide spans 92 to 180 (RDVSTPPTVL…APPEMASNRK (89 aa)) (e peptide). O-linked (GalNAc...) threonine glycosylation is found at Thr96, Thr99, and Thr163. The interval 161–180 (LPTQDPAHGGAPPEMASNRK) is disordered.

It belongs to the insulin family. As to quaternary structure, interacts with MYORG; this interaction is required for IGF2 secretion. Interacts with integrins ITGAV:ITGB3 and ITGA6:ITGB4; integrin-binding is required for IGF2 signaling. Interacts with IGFBP2. In terms of processing, O-glycosylated with core 1 or possibly core 8 glycans. Thr-96 is a minor glycosylation site compared to Thr-99. Proteolytically processed by PCSK4, proIGF2 is cleaved at Arg-128 and Arg-92 to generate big-IGF2 and mature IGF2. As to expression, expressed in heart, placenta, lung, liver, muscle, kidney, tongue, limb, eye and pancreas.

The protein resides in the secreted. The insulin-like growth factors possess growth-promoting activity. Major fetal growth hormone in mammals. Plays a key role in regulating fetoplacental development. IGF2 is influenced by placental lactogen. Also involved in tissue differentiation. In adults, involved in glucose metabolism in adipose tissue, skeletal muscle and liver. Acts as a ligand for integrin which is required for IGF2 signaling. Positively regulates myogenic transcription factor MYOD1 function by facilitating the recruitment of transcriptional coactivators, thereby controlling muscle terminal differentiation. Inhibits myoblast differentiation and modulates metabolism via increasing the mitochondrial respiration rate. Its function is as follows. Preptin undergoes glucose-mediated co-secretion with insulin, and acts as a physiological amplifier of glucose-mediated insulin secretion. Exhibits osteogenic properties by increasing osteoblast mitogenic activity through phosphoactivation of MAPK1 and MAPK3. The chain is Insulin-like growth factor 2 from Homo sapiens (Human).